The chain runs to 172 residues: MDLTNYIASIKDYPKAGITFRDISPLMADGKAYSYAIREIAQYACDKDIDMVVGPEARGFIIGCPVAVELGIGFAPVRKPGKLPRDVVSADYEKEYGLDTLTMHADAIKPGQRVLIVDDLLATGGTVKATIEMIEKLGGIVAGCAFLIELEGLNGRHAIRNYDYKVLMQFPG.

The protein belongs to the purine/pyrimidine phosphoribosyltransferase family. In terms of assembly, homodimer.

It localises to the cytoplasm. The catalysed reaction is AMP + diphosphate = 5-phospho-alpha-D-ribose 1-diphosphate + adenine. It participates in purine metabolism; AMP biosynthesis via salvage pathway; AMP from adenine: step 1/1. In terms of biological role, catalyzes a salvage reaction resulting in the formation of AMP, that is energically less costly than de novo synthesis. The polypeptide is Adenine phosphoribosyltransferase (Streptococcus pyogenes serotype M12 (strain MGAS9429)).